Consider the following 229-residue polypeptide: Mannose-specific lectin TAR1 (229 aa).

The N-terminal stretch at 1 to 23 (MAKLLLFLLPAILGLLIPRSAVA) is a signal peptide. Bulb-type lectin domains are found at residues 26–131 (TNYL…PWVP) and 145–229 (DNLL…DYVL). Beta-D-mannose contacts are provided by residues 51 to 55 (QNDCN), tyrosine 59, tryptophan 63, glutamine 64, 170 to 174 (QGDCN), tyrosine 178, and 182 to 185 (YGWQ). The Carbohydrate-binding motif 1 motif lies at 51–59 (QNDCNLVLY). 2 disulfides stabilise this stretch: cysteine 54–cysteine 74 and cysteine 173–cysteine 195. Residues 170 to 178 (QGDCNLVLY) carry the Carbohydrate-binding motif 2 motif.

Forms heterotetramer of 2 chains 1 and 2 chains 2 arranged as a dimer of chain 1 and chain 2 heterodimers.

The protein localises to the secreted. Mannose-specific lectin. Shows agglutinating activity towards erythrocytes from rabbit. This is Mannose-specific lectin TAR1 from Colocasia esculenta (Wild taro).